The following is a 30-amino-acid chain: Cyclotide hyen-E (30 aa).

Positions 1–30 (GVPCGESCVYIPCFTGIINCSCRDKVCYNN) form a cross-link, cyclopeptide (Gly-Asn). 3 disulfides stabilise this stretch: Cys-4/Cys-20, Cys-8/Cys-22, and Cys-13/Cys-27.

Post-translationally, this is a cyclic peptide. In terms of tissue distribution, detected in stems (at protein level).

Probably participates in a plant defense mechanism. Has cytotoxic activity against HUVEC cells (LC(50)= 2.17 uM) and various cancer cells including HeLa (LC(50)= 3.05 uM), MCF-7 and K562. Displays very weak hemolytic activity. Binds to and induces leakage in phospholipd membranes, particularly ones containing 1-palmitoyl-2-oleophosphatidylethanolamine (POPE). The sequence is that of Cyclotide hyen-E from Pigea enneasperma (Spade flower).